The primary structure comprises 327 residues: L-lactate dehydrogenase (327 aa).

NAD(+) contacts are provided by residues V18, D39, K44, Y69, and 83–84; that span reads GA. Substrate is bound by residues Q86, R92, and 124–127; that span reads NPVD. NAD(+) contacts are provided by residues 122 to 124 and S147; that span reads AAN. Residue 152–155 participates in substrate binding; sequence DSAR. Beta-D-fructose 1,6-bisphosphate is bound by residues R157 and H172. Residue H179 is the Proton acceptor of the active site. The residue at position 224 (Y224) is a Phosphotyrosine. Residue T233 coordinates substrate.

Belongs to the LDH/MDH superfamily. LDH family. As to quaternary structure, homotetramer.

Its subcellular location is the cytoplasm. It carries out the reaction (S)-lactate + NAD(+) = pyruvate + NADH + H(+). It functions in the pathway fermentation; pyruvate fermentation to lactate; (S)-lactate from pyruvate: step 1/1. Its activity is regulated as follows. Allosterically activated by fructose 1,6-bisphosphate (FBP). Its function is as follows. Catalyzes the conversion of lactate to pyruvate. In Streptococcus equi subsp. zooepidemicus (strain H70), this protein is L-lactate dehydrogenase.